Here is a 220-residue protein sequence, read N- to C-terminus: Translin-1 (220 aa).

The protein belongs to the translin family. As to quaternary structure, forms an octameric ring-shaped structure, which is capable of binding DNA or RNA.

It is found in the cytoplasm. The protein resides in the nucleus. Its function is as follows. DNA-binding protein that specifically recognizes consensus sequences at the breakpoint junctions in chromosomal translocations. Selectively binds single-stranded d(GT)n and d(GTT)n microsatellite repeats. Has much higher affinities for the homologous RNA sequences (GU)n and (GUU)n. Does not bind double-stranded DNA. Has a role in meiosis. This chain is Translin-1 (tsn1), found in Schizosaccharomyces pombe (strain 972 / ATCC 24843) (Fission yeast).